A 331-amino-acid polypeptide reads, in one-letter code: Bifunctional nuclease (331 aa).

Residues Cys-126–Val-261 form the BFN domain. The 36-residue stretch at Glu-291–Lys-326 folds into the UVR domain.

The protein belongs to the bifunctional nuclease family.

The protein resides in the nucleus. In terms of biological role, bifunctional nuclease with both RNase and DNase activities. Involved in basal defense response. Participates in abscisic acid-derived callose deposition following infection by a necrotrophic pathogen. The polypeptide is Bifunctional nuclease (BBD) (Oryza minuta).